Here is a 372-residue protein sequence, read N- to C-terminus: Peptide chain release factor 1 (372 aa).

Position 237 is an N5-methylglutamine (glutamine 237).

The protein belongs to the prokaryotic/mitochondrial release factor family. Post-translationally, methylated by PrmC. Methylation increases the termination efficiency of RF1.

The protein resides in the cytoplasm. In terms of biological role, peptide chain release factor 1 directs the termination of translation in response to the peptide chain termination codons UAG and UAA. The sequence is that of Peptide chain release factor 1 from Anaeromyxobacter sp. (strain Fw109-5).